Reading from the N-terminus, the 941-residue chain is MutS protein homolog 1 (941 aa).

747–754 serves as a coordination point for ATP; it reads GPNMAGKS.

This sequence belongs to the DNA mismatch repair MutS family.

Its subcellular location is the cytoplasm. It is found in the mitochondrion. Functionally, involved in mitochondrial DNA repair. This is MutS protein homolog 1 (msh1) from Schizosaccharomyces pombe (strain 972 / ATCC 24843) (Fission yeast).